A 394-amino-acid chain; its full sequence is F-box protein At2g17830 (394 aa).

The 47-residue stretch at 1-47 (MAIMSDLPRDLLAEILSRVPLASLRSVRFTCKKWNDLSKDRSFLKKQ) folds into the F-box domain.

The sequence is that of F-box protein At2g17830 from Arabidopsis thaliana (Mouse-ear cress).